The primary structure comprises 679 residues: UvrABC system protein B (679 aa).

The region spanning 25 to 190 is the Helicase ATP-binding domain; it reads EGVNQGQRYQ…SRNDFDITRG (166 aa). An ATP-binding site is contributed by 38-45; it reads GATGTGKT. The Beta-hairpin signature appears at 91 to 114; sequence YYDYYQPEAYVPVSDTYIAKTASI. The 163-residue stretch at 429–591 folds into the Helicase C-terminal domain; it reads QVDDLLAEIR…IVPRPAGKRA (163 aa). Positions 639–674 constitute a UVR domain; sequence PELIDQLETKMKEAAKNLNFEEAASLRDRIKKFRQK.

The protein belongs to the UvrB family. In terms of assembly, forms a heterotetramer with UvrA during the search for lesions. Interacts with UvrC in an incision complex.

Its subcellular location is the cytoplasm. Its function is as follows. The UvrABC repair system catalyzes the recognition and processing of DNA lesions. A damage recognition complex composed of 2 UvrA and 2 UvrB subunits scans DNA for abnormalities. Upon binding of the UvrA(2)B(2) complex to a putative damaged site, the DNA wraps around one UvrB monomer. DNA wrap is dependent on ATP binding by UvrB and probably causes local melting of the DNA helix, facilitating insertion of UvrB beta-hairpin between the DNA strands. Then UvrB probes one DNA strand for the presence of a lesion. If a lesion is found the UvrA subunits dissociate and the UvrB-DNA preincision complex is formed. This complex is subsequently bound by UvrC and the second UvrB is released. If no lesion is found, the DNA wraps around the other UvrB subunit that will check the other stand for damage. This chain is UvrABC system protein B, found in Prochlorococcus marinus (strain MIT 9303).